A 117-amino-acid chain; its full sequence is Large ribosomal subunit protein eL34 (117 aa).

Ser12 is subject to Phosphoserine. N6-acetyllysine is present on residues Lys36 and Lys43. Lys108 is covalently cross-linked (Glycyl lysine isopeptide (Lys-Gly) (interchain with G-Cter in SUMO2)).

This sequence belongs to the eukaryotic ribosomal protein eL34 family. As to quaternary structure, component of the large ribosomal subunit.

It is found in the cytoplasm. The protein localises to the cytosol. Its subcellular location is the endoplasmic reticulum. Functionally, component of the large ribosomal subunit. The ribosome is a large ribonucleoprotein complex responsible for the synthesis of proteins in the cell. The sequence is that of Large ribosomal subunit protein eL34 (Rpl34) from Mus musculus (Mouse).